The primary structure comprises 591 residues: Aspartate--tRNA ligase (591 aa).

Position 173 (Glu-173) interacts with L-aspartate. The segment at Gln-197 to Lys-200 is aspartate. Arg-219 contacts L-aspartate. ATP contacts are provided by residues Arg-219–Glu-221 and Gln-228. An L-aspartate-binding site is contributed by His-448. An ATP-binding site is contributed by Glu-482. Arg-489 is a binding site for L-aspartate. Gly-534–Arg-537 lines the ATP pocket.

Belongs to the class-II aminoacyl-tRNA synthetase family. Type 1 subfamily. Homodimer.

The protein resides in the cytoplasm. The catalysed reaction is tRNA(Asp) + L-aspartate + ATP = L-aspartyl-tRNA(Asp) + AMP + diphosphate. Functionally, catalyzes the attachment of L-aspartate to tRNA(Asp) in a two-step reaction: L-aspartate is first activated by ATP to form Asp-AMP and then transferred to the acceptor end of tRNA(Asp). This is Aspartate--tRNA ligase from Shewanella sp. (strain MR-4).